The chain runs to 142 residues: Large ribosomal subunit protein uL13 (142 aa).

Belongs to the universal ribosomal protein uL13 family. Part of the 50S ribosomal subunit.

Its function is as follows. This protein is one of the early assembly proteins of the 50S ribosomal subunit, although it is not seen to bind rRNA by itself. It is important during the early stages of 50S assembly. This is Large ribosomal subunit protein uL13 from Alteromonas mediterranea (strain DSM 17117 / CIP 110805 / LMG 28347 / Deep ecotype).